A 129-amino-acid polypeptide reads, in one-letter code: Iron-sulfur cluster assembly 1 homolog, mitochondrial (129 aa).

A mitochondrion-targeting transit peptide spans 1–12 (MSASLVRATVRA). Fe cation contacts are provided by C57, C121, and C123.

The protein belongs to the HesB/IscA family. In terms of assembly, interacts with CRY2, but not with CRY1 (in vitro).

It localises to the mitochondrion. Its function is as follows. Involved in the maturation of mitochondrial 4Fe-4S proteins functioning late in the iron-sulfur cluster assembly pathway. Probably involved in the binding of an intermediate of Fe/S cluster assembly. In Rattus norvegicus (Rat), this protein is Iron-sulfur cluster assembly 1 homolog, mitochondrial (Isca1).